The sequence spans 615 residues: Protein ENHANCED DISEASE RESISTANCE 4 (615 aa).

Disordered regions lie at residues 46–271, 292–336, and 549–592; these read IAPS…DDDE, YKEQ…GRQG, and THDI…RGSP. 2 stretches are compositionally biased toward polar residues: residues 63–89 and 119–129; these read NEPQSVPETNNVSSSSGQDTVLPSSPG and GDGTNEIQEQE. The stretch at 104 to 129 forms a coiled coil; sequence MESTEKELDDLELSNGDGTNEIQEQE. The span at 134 to 148 shows a compositional bias: basic and acidic residues; the sequence is DSEKNEREDNSRLES. Over residues 159–168 the composition is skewed to low complexity; that stretch reads GSGSSSGSLS. Polar residues-rich tracts occupy residues 296–314 and 552–564; these read GASSSSPFSENRRNGITTY and INANRNSNSTSES. The span at 565-577 shows a compositional bias: basic and acidic residues; it reads PIDKAPSKPEKLR.

Interacts with RLK902. Binds and recruits EDR1 at the powdery mildew (e.g. G.cichoracearum) penetration site on the plasma membrane. Interacts with CHC2. In terms of tissue distribution, expressed in stems and rosette leaves, and weakly in inflorescences. Not detected in roots.

The protein localises to the cell membrane. The protein resides in the endosome. In terms of biological role, plays a negative role in salicylic acid (SA)-mediated resistance to powdery mildew (e.g. Golovinomyces cichoracearum). May modulate plant immunity by regulating the relocation of EDR1 by interacting with CHC2 and modulating endocytosis. This chain is Protein ENHANCED DISEASE RESISTANCE 4, found in Arabidopsis thaliana (Mouse-ear cress).